The primary structure comprises 296 residues: MHFQDIISTLNRFWSEQGCLLLQPYDTEKGAGTMSPHTVLRAIGPEPWAVAYPEPCRRPTDGRYGDNPNRAQHYFQYQVLIKPSPDGIQETYLASLEALGIKAADHDIRFVEDNWESPTLGAWGVGWEVWLDGMEVTQFTYFQQCGGLDCKPVSIEITYGLERLAMYLQDVESIWDLSWNAQRSYGDIWLPFEKGQCHFNFEASNPERLKQLFAIYEAEATDLIAQNLPAPALDFVLKCSHTFNLLEARGVISVTERTATIGRIRTLARKVAEAWLAEREALGFPLLEPSAATAAV.

The protein belongs to the class-II aminoacyl-tRNA synthetase family. Tetramer of two alpha and two beta subunits.

The protein resides in the cytoplasm. It catalyses the reaction tRNA(Gly) + glycine + ATP = glycyl-tRNA(Gly) + AMP + diphosphate. The polypeptide is Glycine--tRNA ligase alpha subunit (Synechococcus sp. (strain WH7803)).